Consider the following 470-residue polypeptide: Ras-like GTPase HI_1637 (470 aa).

Residues 27-34 carry the Walker A motif motif; it reads GLSRSGKT. 12 residues coordinate GTP: serine 29, glycine 32, lysine 33, threonine 34, alanine 35, tryptophan 98, serine 101, threonine 102, arginine 103, lysine 342, aspartate 344, and histidine 345. GDP is bound by residues glycine 32, lysine 33, threonine 34, alanine 35, tryptophan 98, serine 101, and threonine 102. Lysine 342, aspartate 344, histidine 345, alanine 383, and valine 384 together coordinate GDP. Valine 384 provides a ligand contact to GTP.

To E.coli YcjX. In terms of assembly, monomer in solution. Mg(2+) is required as a cofactor.

It catalyses the reaction GTP + H2O = GDP + phosphate + H(+). With respect to regulation, alternates between an inactive form bound to GDP and an active form bound to GTP. Likely activated by a guanine nucleotide-exchange factor (GEF). In terms of biological role, binds GTP and GDP. Has intrinsic GTPase activity. Does not hydrolyze ATP. May act as a transducer of stress responses. This is Ras-like GTPase HI_1637 from Haemophilus influenzae (strain ATCC 51907 / DSM 11121 / KW20 / Rd).